A 519-amino-acid polypeptide reads, in one-letter code: Putative glucosylceramidase 4 (519 aa).

Positions 1 to 24 (MILNISVSLLIFLAFYGFSSDAKS) are cleaved as a signal peptide. Catalysis depends on Glu256, which acts as the Proton donor. Glu361 acts as the Nucleophile in catalysis.

The protein belongs to the glycosyl hydrolase 30 family.

The catalysed reaction is a beta-D-glucosylceramide + H2O = an N-acyl-sphingoid base + D-glucose. The enzyme catalyses a beta-D-glucosyl-(1&lt;-&gt;1')-N-acylsphing-4-enine + H2O = an N-acylsphing-4-enine + D-glucose. It catalyses the reaction an N-acyl-1-beta-D-glucosyl-15-methylhexadecasphing-4-enine + H2O = an N-acyl-15-methylhexadecasphing-4-enine + D-glucose. It functions in the pathway lipid metabolism; sphingolipid metabolism. Glucosylceramidase that catalyzes the hydrolysis of glucosylceramides into free ceramides and glucose. C.elegans contains specific sphingoid bases, which are unique or different in structure compared to the sphingoid bases found in other animals. Two examples of these distinctive compounds are: 15-methylhexadecasphinganine and 15-methylhexadecasphing-4-enine. The polypeptide is Putative glucosylceramidase 4 (gba-4) (Caenorhabditis elegans).